A 316-amino-acid chain; its full sequence is HPr kinase/phosphorylase (316 aa).

Active-site residues include His-143 and Lys-164. Gly-158–Ser-165 serves as a coordination point for ATP. Ser-165 serves as a coordination point for Mg(2+). Asp-182 serves as the catalytic Proton acceptor; for phosphorylation activity. Proton donor; for dephosphorylation activity. Positions Leu-206–Asn-215 are important for the catalytic mechanism of both phosphorylation and dephosphorylation. Mg(2+) is bound at residue Glu-207. Arg-251 is a catalytic residue. The interval Pro-272–Arg-277 is important for the catalytic mechanism of dephosphorylation.

This sequence belongs to the HPrK/P family. As to quaternary structure, homohexamer. Requires Mg(2+) as cofactor.

The catalysed reaction is [HPr protein]-L-serine + ATP = [HPr protein]-O-phospho-L-serine + ADP + H(+). The enzyme catalyses [HPr protein]-O-phospho-L-serine + phosphate + H(+) = [HPr protein]-L-serine + diphosphate. Functionally, catalyzes the ATP- as well as the pyrophosphate-dependent phosphorylation of a specific serine residue in HPr, a phosphocarrier protein of the phosphoenolpyruvate-dependent sugar phosphotransferase system (PTS). HprK/P also catalyzes the pyrophosphate-producing, inorganic phosphate-dependent dephosphorylation (phosphorolysis) of seryl-phosphorylated HPr (P-Ser-HPr). This chain is HPr kinase/phosphorylase, found in Stenotrophomonas maltophilia (strain K279a).